We begin with the raw amino-acid sequence, 127 residues long: uncharacterized protein (127 aa).

A compositionally biased stretch (polar residues) spans 1–13 (MEAGNRSGTPQHR). The tract at residues 1-26 (MEAGNRSGTPQHRQLSEIRQDLSSSP) is disordered.

This is an uncharacterized protein from Saccharomyces cerevisiae (strain ATCC 204508 / S288c) (Baker's yeast).